The sequence spans 361 residues: Phosphate acyltransferase (361 aa).

A disordered region spans residues 340–361; it reads VPADGAATEQGPTPRRIAPPRT.

It belongs to the PlsX family. As to quaternary structure, homodimer. Probably interacts with PlsY.

The protein localises to the cytoplasm. The enzyme catalyses a fatty acyl-[ACP] + phosphate = an acyl phosphate + holo-[ACP]. Its pathway is lipid metabolism; phospholipid metabolism. Functionally, catalyzes the reversible formation of acyl-phosphate (acyl-PO(4)) from acyl-[acyl-carrier-protein] (acyl-ACP). This enzyme utilizes acyl-ACP as fatty acyl donor, but not acyl-CoA. The chain is Phosphate acyltransferase from Anaeromyxobacter dehalogenans (strain 2CP-1 / ATCC BAA-258).